We begin with the raw amino-acid sequence, 346 residues long: Sesquiterpene synthase Agr1 (346 aa).

Residues D98, N234, S238, and E242 each coordinate Mg(2+). A DDXXD motif motif is present at residues 98 to 102; that stretch reads DNLSD. Positions 322 and 323 each coordinate (2E,6E)-farnesyl diphosphate.

The protein belongs to the terpene synthase family. Mg(2+) is required as a cofactor.

It catalyses the reaction (2E,6E)-farnesyl diphosphate = delta-cadinene + diphosphate. The enzyme catalyses (2E,6E)-farnesyl diphosphate = alpha-muurolene + diphosphate. The catalysed reaction is (2E,6E)-farnesyl diphosphate = gamma-muurolene + diphosphate. It carries out the reaction (2E,6E)-farnesyl diphosphate = alpha-selinene + diphosphate. Its function is as follows. Terpene cyclase that catalyzes the cyclization of farnesyl diphosphate (FPP) to various sesquiterpenes, including alpha-muurolene, gamma-muurolene, alpha-selinene, beta-selinene, delta-cadinene, alpha-cadinol and delta-cadinol. Delta-cadinene is the major product of Agr1. The chain is Sesquiterpene synthase Agr1 from Cyclocybe aegerita (Black poplar mushroom).